Here is a 412-residue protein sequence, read N- to C-terminus: D-amino acid dehydrogenase 3 (412 aa).

4–18 contacts FAD; the sequence is IVVIGAGIAGVSTAY.

Belongs to the DadA oxidoreductase family. FAD serves as cofactor.

The catalysed reaction is a D-alpha-amino acid + A + H2O = a 2-oxocarboxylate + AH2 + NH4(+). Oxidative deamination of D-amino acids. This is D-amino acid dehydrogenase 3 (dadA3) from Mesorhizobium japonicum (strain LMG 29417 / CECT 9101 / MAFF 303099) (Mesorhizobium loti (strain MAFF 303099)).